Reading from the N-terminus, the 946-residue chain is Protein RRC1 (946 aa).

2 disordered regions span residues 1–29 and 41–183; these read MSSF…KAED and SFQG…NLYV. Composition is skewed to basic and acidic residues over residues 15–29, 62–75, and 98–147; these read KHRE…KAED, DKPK…KSKD, and KGKE…DRQG. Residues 179 to 260 enclose the RRM domain; it reads TNLYVGNLSP…YELKIGWGKA (82 aa). One copy of the SURP motif repeat lies at 329-372; that stretch reads VIDTLALYVLDGECAFEQAIMERGRGNPLFKFMFELGSKEHTYY. One can recognise a CID domain in the interval 437–582; the sequence is LTDPQRDEFE…GLRSTFLRSG (146 aa). Positions 631-665 constitute an SAP domain; that stretch reads LMNLPIAELERRCRHNGLSLVGGRVMMVTRLLSLE. Disordered regions lie at residues 740-797 and 836-946; these read ASKW…EQRQ and EVDY…RGTR. Residues 757–767 are compositionally biased toward polar residues; it reads SSSSGSDNTGG. 3 stretches are compositionally biased toward basic and acidic residues: residues 772 to 781, 854 to 868, and 886 to 946; these read ADGEDLKGND, IIER…QESS, and STRE…RGTR.

As to quaternary structure, component of the SWAP1-SFPS-RRC1 splicing factor complex which modulates pre-mRNA splicing to promote photomorphogenesis. Interacts with SWAP1 in a light-independent manner. Expressed in leaves, inflorescence stems, roots, flower buds, open flowers and siliques.

It is found in the nucleus speckle. Functionally, as a member of the SWAP1-SFPS-RRC1 splicing factor complex, modulates photomorphogenesis by regulating the gene expression and pre-messenger RNA (mRNA) alternative splicing of a large number of genes, including those involved in plant responses to light signaling. SR-like splicing factor required for phytochrome B (phyB) signal transduction and involved in phyB-dependent alternative splicing. This chain is Protein RRC1, found in Arabidopsis thaliana (Mouse-ear cress).